Here is a 150-residue protein sequence, read N- to C-terminus: MKCPFCGQLDSKVVDSRPDKGGAAIRRRRECESCGKRFTTHERIEEVLPLVLKKDGRREPFDRLKLIAGIQKACEKRQVSRETIERLVDRLEARLPELGEKEVPSTTIGEWVMTELHDIDEVAYVRFASVYRSFKDVNEFMSELQDLLKK.

A zinc finger spans residues 3-34; it reads CPFCGQLDSKVVDSRPDKGGAAIRRRRECESC. The ATP-cone domain maps to 49–139; sequence PLVLKKDGRR…VYRSFKDVNE (91 aa).

The protein belongs to the NrdR family. It depends on Zn(2+) as a cofactor.

Its function is as follows. Negatively regulates transcription of bacterial ribonucleotide reductase nrd genes and operons by binding to NrdR-boxes. The polypeptide is Transcriptional repressor NrdR (Geobacter sulfurreducens (strain ATCC 51573 / DSM 12127 / PCA)).